A 399-amino-acid chain; its full sequence is ATP-dependent RNA helicase FAL1 (399 aa).

A Q motif motif is present at residues 26–54; sequence ATFESMNLKPDLLKGIYGYGFEAPSAIQS. Residues 57–227 form the Helicase ATP-binding domain; sequence IMQIINGRDT…NKFTTDPVKI (171 aa). 70–77 contacts ATP; that stretch reads AQSGTGKT. The DEAD box motif lies at 175 to 178; that stretch reads DEAD. The region spanning 238-399 is the Helicase C-terminal domain; that stretch reads GIKQYHVQCE…EMPMNINDIM (162 aa).

It belongs to the DEAD box helicase family. DDX48/FAL1 subfamily.

It is found in the nucleus. Its subcellular location is the nucleolus. It carries out the reaction ATP + H2O = ADP + phosphate + H(+). Functionally, ATP-dependent RNA helicase involved in 40S ribosomal subunit biogenesis. Required for the processing and cleavage of 35S pre-rRNA at sites A0, A1, and A2, leading to mature 18S rRNA. The chain is ATP-dependent RNA helicase FAL1 (FAL1) from Scheffersomyces stipitis (strain ATCC 58785 / CBS 6054 / NBRC 10063 / NRRL Y-11545) (Yeast).